A 188-amino-acid chain; its full sequence is Ribosome-recycling factor (188 aa).

It belongs to the RRF family.

It localises to the cytoplasm. Responsible for the release of ribosomes from messenger RNA at the termination of protein biosynthesis. May increase the efficiency of translation by recycling ribosomes from one round of translation to another. The protein is Ribosome-recycling factor of Caulobacter vibrioides (strain NA1000 / CB15N) (Caulobacter crescentus).